Here is a 155-residue protein sequence, read N- to C-terminus: Transcriptional repressor NrdR (155 aa).

A zinc finger lies at 3–34; it reads CPKCDHNGTRVLDSRPVQDHYSIRRRRECEKC. In terms of domain architecture, ATP-cone spans 49-139; sequence LIIVKKDGNR…VYRQFKDITV (91 aa).

The protein belongs to the NrdR family. It depends on Zn(2+) as a cofactor.

In terms of biological role, negatively regulates transcription of bacterial ribonucleotide reductase nrd genes and operons by binding to NrdR-boxes. This Exiguobacterium sp. (strain ATCC BAA-1283 / AT1b) protein is Transcriptional repressor NrdR.